The primary structure comprises 350 residues: HTH-type DNA-binding transcriptional activator EutR (350 aa).

Residues 243–344 enclose the HTH araC/xylS-type domain; the sequence is SRAREYVLEN…AEKPSLTLHQ (102 aa). 2 consecutive DNA-binding regions (H-T-H motif) follow at residues 260–281 and 311–334; these read LDLCNQLHVSRRTLQNAFHAIL and VKDAAMQWGFWHLGQFATDYQQLF.

Its pathway is amine and polyamine degradation; ethanolamine degradation. Functionally, activates the transcription of the eut operon, allowing utilization of ethanolamine (EA). Positively regulates its own transcription. Probably binds EA and vitamin B12 as effectors. Competes with ethanolamine ammonia-lysase (EAL, the first enzyme in the EA degradation pathway) for adenosylcobalamin. Ethanolamine-associated signaling mediated via this protein, but not EA degradation, impacts S.typhimurium survival within macrophages. Binds the promoter of ssrB and eutS in vitro; in mouse infection models binding to ssrB probably induces all 4 operons of pathogenicity island SPI-2. Its function is as follows. Expression of the eut operon allows this bacteria to use ethanolamine (EA) as a carbon, nitrogen and energy source. It relies on cobalamin (vitamin B12) both as a cofactor for the ethanolamine ammonia-lyase (EAL) activity and to induce the operon. EA enhances bacterial survival in macrophages in a concentration-dependent manner, suggesting it is an important nutrient in infection. The protein is HTH-type DNA-binding transcriptional activator EutR of Salmonella typhimurium (strain LT2 / SGSC1412 / ATCC 700720).